A 403-amino-acid polypeptide reads, in one-letter code: Chalcone synthase 2 (403 aa).

59–66 (RFQRMCES) is a CoA binding site. Cys-168 acts as the Acyl-thioester intermediate in catalysis. 220 to 221 (GD) lines the substrate pocket. Ala-313 contacts CoA.

It belongs to the thiolase-like superfamily. Chalcone/stilbene synthases family. In terms of assembly, homodimer.

It catalyses the reaction (E)-4-coumaroyl-CoA + 3 malonyl-CoA + 3 H(+) = 2',4,4',6'-tetrahydroxychalcone + 3 CO2 + 4 CoA. It functions in the pathway secondary metabolite biosynthesis; flavonoid biosynthesis. Functionally, the primary product of this enzyme is 4,2',4',6'-tetrahydroxychalcone (also termed naringenin-chalcone or chalcone) which can under specific conditions spontaneously isomerize into naringenin. This chain is Chalcone synthase 2 (CHS2), found in Oryza sativa subsp. japonica (Rice).